Consider the following 307-residue polypeptide: 2-methoxy-6-polyprenyl-1,4-benzoquinol methylase, mitochondrial (307 aa).

The transit peptide at 1 to 19 (MLISSRIVRSSLVNVPLRL) directs the protein to the mitochondrion. Residues Ser122, Asp148, 179-180 (NG), and Ser197 each bind S-adenosyl-L-methionine.

Belongs to the class I-like SAM-binding methyltransferase superfamily. MenG/UbiE family. Component of a multi-subunit COQ enzyme complex, composed of at least COQ3, COQ4, COQ5, COQ6, COQ7 and COQ9. Interacts with COQ3.

The protein resides in the mitochondrion inner membrane. The catalysed reaction is 2-methoxy-6-(all-trans-hexaprenyl)benzene-1,4-diol + S-adenosyl-L-methionine = 5-methoxy-2-methyl-3-(all-trans-hexaprenyl)benzene-1,4-diol + S-adenosyl-L-homocysteine + H(+). It participates in cofactor biosynthesis; ubiquinone biosynthesis. In terms of biological role, methyltransferase required for the conversion of 2-hexaprenyl-6-methoxy-1,4-benzoquinol (DDMQH2) to 2-hexaprenyl-3-methyl-6-methoxy-1,4-benzoquinol (DMQH2). This chain is 2-methoxy-6-polyprenyl-1,4-benzoquinol methylase, mitochondrial, found in Saccharomyces cerevisiae (strain ATCC 204508 / S288c) (Baker's yeast).